The following is a 352-amino-acid chain: Holliday junction branch migration complex subunit RuvB (352 aa).

A large ATPase domain (RuvB-L) region spans residues 5-191; it reads TDDFSEQRVI…FGIVARLEFY (187 aa). Residues L30, R31, G72, K75, T76, T77, 138 to 140, R181, Y191, and R228 each bind ATP; that span reads EDY. Residue T76 participates in Mg(2+) binding. The segment at 192-262 is small ATPAse domain (RuvB-S); that stretch reads TPLELTRIVT…MADAALVMLD (71 aa). The tract at residues 265-352 is head domain (RuvB-H); that stretch reads PVGFDVMDRK…GPNGELWGGQ (88 aa). Residues R301, R320, and R325 each contribute to the DNA site.

The protein belongs to the RuvB family. As to quaternary structure, homohexamer. Forms an RuvA(8)-RuvB(12)-Holliday junction (HJ) complex. HJ DNA is sandwiched between 2 RuvA tetramers; dsDNA enters through RuvA and exits via RuvB. An RuvB hexamer assembles on each DNA strand where it exits the tetramer. Each RuvB hexamer is contacted by two RuvA subunits (via domain III) on 2 adjacent RuvB subunits; this complex drives branch migration. In the full resolvosome a probable DNA-RuvA(4)-RuvB(12)-RuvC(2) complex forms which resolves the HJ.

Its subcellular location is the cytoplasm. The catalysed reaction is ATP + H2O = ADP + phosphate + H(+). Its function is as follows. The RuvA-RuvB-RuvC complex processes Holliday junction (HJ) DNA during genetic recombination and DNA repair, while the RuvA-RuvB complex plays an important role in the rescue of blocked DNA replication forks via replication fork reversal (RFR). RuvA specifically binds to HJ cruciform DNA, conferring on it an open structure. The RuvB hexamer acts as an ATP-dependent pump, pulling dsDNA into and through the RuvAB complex. RuvB forms 2 homohexamers on either side of HJ DNA bound by 1 or 2 RuvA tetramers; 4 subunits per hexamer contact DNA at a time. Coordinated motions by a converter formed by DNA-disengaged RuvB subunits stimulates ATP hydrolysis and nucleotide exchange. Immobilization of the converter enables RuvB to convert the ATP-contained energy into a lever motion, pulling 2 nucleotides of DNA out of the RuvA tetramer per ATP hydrolyzed, thus driving DNA branch migration. The RuvB motors rotate together with the DNA substrate, which together with the progressing nucleotide cycle form the mechanistic basis for DNA recombination by continuous HJ branch migration. Branch migration allows RuvC to scan DNA until it finds its consensus sequence, where it cleaves and resolves cruciform DNA. This chain is Holliday junction branch migration complex subunit RuvB, found in Herminiimonas arsenicoxydans.